We begin with the raw amino-acid sequence, 480 residues long: 3-isopropylmalate dehydratase large subunit (480 aa).

Residues Cys-357, Cys-417, and Cys-420 each coordinate [4Fe-4S] cluster. Residues 431–441 show a composition bias toward polar residues; the sequence is GQRCASTSNRN. The segment at 431–454 is disordered; sequence GQRCASTSNRNFEGRQGKGGRTHL.

This sequence belongs to the aconitase/IPM isomerase family. LeuC type 1 subfamily. In terms of assembly, heterodimer of LeuC and LeuD. [4Fe-4S] cluster serves as cofactor.

It carries out the reaction (2R,3S)-3-isopropylmalate = (2S)-2-isopropylmalate. The protein operates within amino-acid biosynthesis; L-leucine biosynthesis; L-leucine from 3-methyl-2-oxobutanoate: step 2/4. Catalyzes the isomerization between 2-isopropylmalate and 3-isopropylmalate, via the formation of 2-isopropylmaleate. This is 3-isopropylmalate dehydratase large subunit from Mycobacteroides abscessus (strain ATCC 19977 / DSM 44196 / CCUG 20993 / CIP 104536 / JCM 13569 / NCTC 13031 / TMC 1543 / L948) (Mycobacterium abscessus).